A 204-amino-acid polypeptide reads, in one-letter code: Guanylate kinase (204 aa).

Positions 18 to 196 (PKLFTISAPA…SYEILKSIFI (179 aa)) constitute a Guanylate kinase-like domain. Position 25 to 32 (25 to 32 (APAGAGKT)) interacts with ATP.

Belongs to the guanylate kinase family.

The protein localises to the cytoplasm. The catalysed reaction is GMP + ATP = GDP + ADP. In terms of biological role, essential for recycling GMP and indirectly, cGMP. The sequence is that of Guanylate kinase from Chlamydia felis (strain Fe/C-56) (Chlamydophila felis).